Reading from the N-terminus, the 215-residue chain is LysM and putative peptidoglycan-binding domain-containing protein 2 (215 aa).

Positions 1–40 (MADSSPAPSLRAGGPREPRPSAPSPPPPHSRLGSEAEEAE) are disordered. Position 2 is an N-acetylalanine (Ala-2). Phosphoserine occurs at positions 5, 24, 34, and 58. Positions 20–29 (PSAPSPPPPH) are enriched in pro residues. A LysM domain is found at 72–116 (VEHRVRAGDTLQGIALKYGVSMEQIKRANKLFTNDCIFLKKTLNI). A disordered region spans residues 194 to 215 (AKKLKGESRDEEGLYTASLYHS).

This is LysM and putative peptidoglycan-binding domain-containing protein 2 (LYSMD2) from Bos taurus (Bovine).